A 264-amino-acid polypeptide reads, in one-letter code: Thymidylate synthase (264 aa).

Arg21 serves as a coordination point for dUMP. His51 lines the (6R)-5,10-methylene-5,6,7,8-tetrahydrofolate pocket. 126-127 (RR) contributes to the dUMP binding site. Cys146 serves as the catalytic Nucleophile. DUMP contacts are provided by residues 166–169 (RSAD), Asn177, and 207–209 (HLY). Asp169 lines the (6R)-5,10-methylene-5,6,7,8-tetrahydrofolate pocket. Ala263 lines the (6R)-5,10-methylene-5,6,7,8-tetrahydrofolate pocket.

This sequence belongs to the thymidylate synthase family. Bacterial-type ThyA subfamily. In terms of assembly, homodimer.

It localises to the cytoplasm. It carries out the reaction dUMP + (6R)-5,10-methylene-5,6,7,8-tetrahydrofolate = 7,8-dihydrofolate + dTMP. Its pathway is pyrimidine metabolism; dTTP biosynthesis. In terms of biological role, catalyzes the reductive methylation of 2'-deoxyuridine-5'-monophosphate (dUMP) to 2'-deoxythymidine-5'-monophosphate (dTMP) while utilizing 5,10-methylenetetrahydrofolate (mTHF) as the methyl donor and reductant in the reaction, yielding dihydrofolate (DHF) as a by-product. This enzymatic reaction provides an intracellular de novo source of dTMP, an essential precursor for DNA biosynthesis. The protein is Thymidylate synthase of Cupriavidus necator (strain ATCC 17699 / DSM 428 / KCTC 22496 / NCIMB 10442 / H16 / Stanier 337) (Ralstonia eutropha).